Consider the following 92-residue polypeptide: Small ribosomal subunit protein uS19 (92 aa).

It belongs to the universal ribosomal protein uS19 family.

In terms of biological role, protein S19 forms a complex with S13 that binds strongly to the 16S ribosomal RNA. The chain is Small ribosomal subunit protein uS19 from Polaromonas sp. (strain JS666 / ATCC BAA-500).